A 315-amino-acid chain; its full sequence is Ectopic P granules protein 4 (315 aa).

6 consecutive transmembrane segments (helical) span residues I84 to F104, I113 to F133, L146 to L166, I190 to G210, I221 to S241, and I242 to I262.

It belongs to the EI24 family. Expressed in pharyngeal and body wall muscles and intestine cells.

The protein localises to the cytoplasm. The protein resides in the membrane. In terms of biological role, involved in autophagy. Thought to act in autophagasome and omegasome formation. The protein is Ectopic P granules protein 4 of Caenorhabditis elegans.